We begin with the raw amino-acid sequence, 695 residues long: Threonine--tRNA ligase (695 aa).

A TGS domain is found at 1–66 (MSAPARPAPA…DTDVEVTPVA (66 aa)). A catalytic region spans residues 263 to 569 (DHRKLGVELD…LTEHYAGAFP (307 aa)). Residues cysteine 368, histidine 419, and histidine 546 each contribute to the Zn(2+) site.

This sequence belongs to the class-II aminoacyl-tRNA synthetase family. In terms of assembly, homodimer. The cofactor is Zn(2+).

The protein resides in the cytoplasm. It catalyses the reaction tRNA(Thr) + L-threonine + ATP = L-threonyl-tRNA(Thr) + AMP + diphosphate + H(+). Functionally, catalyzes the attachment of threonine to tRNA(Thr) in a two-step reaction: L-threonine is first activated by ATP to form Thr-AMP and then transferred to the acceptor end of tRNA(Thr). Also edits incorrectly charged L-seryl-tRNA(Thr). The sequence is that of Threonine--tRNA ligase from Mycolicibacterium gilvum (strain PYR-GCK) (Mycobacterium gilvum (strain PYR-GCK)).